The chain runs to 472 residues: Alanine--anticapsin ligase (472 aa).

Glu109 provides a ligand contact to Mg(2+). ATP is bound by residues Lys138 and Lys178. An ATP-grasp domain is found at Arg142–Cys355. A Mg(2+)-binding site is contributed by Leu182. ATP contacts are provided by residues Ser184–Ser185, Glu226–Leu229, and Gln268. Residues Glu273 and His309–Glu311 contribute to the substrate site. Glu311 and Glu324 together coordinate Mg(2+). Residue Arg328 to Gly331 coordinates substrate.

Monomer or homodimer. Requires Mg(2+) as cofactor.

It carries out the reaction L-anticapsin + L-alanine + ATP = bacilysin + ADP + phosphate + H(+). It participates in antibiotic biosynthesis; bacilysin biosynthesis. Part of the bacABCDEFG operon responsible for the biosynthesis of bacilysin, an irreversible inactivator of the glutaminase domain of glucosamine synthetase. Catalyzes the formation of alpha-dipeptides from various L-amino acids in the presence of ATP. In vivo catalyzes the ligation of L-alanine and L-anticapsin (epoxycyclohexanonyl-Ala) to produce the final bacilysin antibiotic (L-Ala-L-4S-cyclohexenonyl-Ala dipeptide). The substrate specificity is restricted to small amino acids such as L-Ala, for the N-terminal end of the dipeptide, whereas a wide range of hydrophobic amino acids such as L-Phe, L-Tyr and L-Met are recognized for the C-terminal end. The chain is Alanine--anticapsin ligase from Bacillus subtilis (strain 168).